The sequence spans 144 residues: Large ribosomal subunit protein uL13 (144 aa).

It belongs to the universal ribosomal protein uL13 family. In terms of assembly, part of the 50S ribosomal subunit.

Its function is as follows. This protein is one of the early assembly proteins of the 50S ribosomal subunit, although it is not seen to bind rRNA by itself. It is important during the early stages of 50S assembly. The polypeptide is Large ribosomal subunit protein uL13 (Natronomonas pharaonis (strain ATCC 35678 / DSM 2160 / CIP 103997 / JCM 8858 / NBRC 14720 / NCIMB 2260 / Gabara) (Halobacterium pharaonis)).